The primary structure comprises 290 residues: CMRF35-like molecule 1 (290 aa).

Positions 1–19 are cleaved as a signal peptide; the sequence is MPLLTLYLLLFWLSGYSIV. The Ig-like V-type domain occupies 20–126; it reads TQITGPTTVN…LGVTVQVTID (107 aa). Over 20–156 the chain is Extracellular; sequence TQITGPTTVN…DNRHKLLKLS (137 aa). Disulfide bonds link cysteine 40-cysteine 108 and cysteine 54-cysteine 62. N-linked (GlcNAc...) asparagine glycosylation is present at asparagine 88. A helical transmembrane segment spans residues 157–177; that stretch reads VLLPLIFTILLLLLVAASLLA. Residues 178 to 290 lie on the Cytoplasmic side of the membrane; it reads WRMMKYQQKA…PTEYSTISRP (113 aa). Positions 267-290 are disordered; that stretch reads GHLSSHLPGRGPEEPTEYSTISRP.

This sequence belongs to the CD300 family. Interacts with PTPN6/SHP-1 in a tyrosine phosphorylation dependent manner. Interacts with IL4R. Phosphorylated on tyrosine. In terms of tissue distribution, highly expressed in spleen, peripheral blood leukocyte and monocyte, and lung. Weakly expressed in thymus, heart, brain, placenta, liver, skeletal muscle, kidney, pancreas, prostate, testis, ovary, small intestine or colon. Expressed selectively in monocytes and monocyte-related cells.

It localises to the cell membrane. Its function is as follows. Acts as an inhibitory receptor for myeloid cells and mast cells. Positively regulates the phagocytosis of apoptotic cells (efferocytosis) via phosphatidylserine (PS) recognition; recognizes and binds PS as a ligand which is expressed on the surface of apoptotic cells. Plays an important role in the maintenance of immune homeostasis, by promoting macrophage-mediated efferocytosis and by inhibiting dendritic cell-mediated efferocytosis. Negatively regulates Fc epsilon receptor-dependent mast cell activation and allergic responses via binding to ceramide and sphingomyelin which act as ligands. May act as a coreceptor for interleukin 4 (IL-4). Associates with and regulates IL-4 receptor alpha-mediated responses by augmenting IL-4- and IL-13-induced signaling. Negatively regulates the Toll-like receptor (TLR) signaling mediated by MYD88 and TRIF through activation of PTPN6/SHP-1 and PTPN11/SHP-2. Inhibits osteoclast formation. Induces macrophage cell death upon engagement. This Homo sapiens (Human) protein is CMRF35-like molecule 1 (CD300LF).